The following is a 639-amino-acid chain: Uridine permease (639 aa).

Residues 1–37 form a disordered region; it reads MPVSDSGFDNSSKTMKDDTIPTEDYEEITKESEMGDA. The Cytoplasmic segment spans residues 1-162; sequence MPVSDSGFDN…LQLGLNWWQT (162 aa). Thr-54 is subject to Phosphothreonine. Position 56 is a phosphoserine (Ser-56). Residues 163–180 traverse the membrane as a helical segment; the sequence is WICIWVGYTFVAFFLILG. The Extracellular segment spans residues 181–200; it reads SKVGNNYHISFPISSRVSFG. A helical transmembrane segment spans residues 201-225; the sequence is IYFSIWIVINRVVMACVWNSTLAYI. Residues 226-259 are Cytoplasmic-facing; sequence GSQCVQLMLKAIFGTNLNTRIKDTIKNPNLTNFE. Residues 260–276 form a helical membrane-spanning segment; it reads FMCFMVFWVACLPFLWF. Topologically, residues 277–283 are extracellular; that stretch reads PPDKLRH. The chain crosses the membrane as a helical span at residues 284–305; the sequence is IFALKSAITPFAAFGFLIWTLC. The Cytoplasmic segment spans residues 306–367; sequence KAKGHLALGS…KTYKSSVYSQ (62 aa). A helical transmembrane segment spans residues 368-392; the sequence is LIALPVCYAIISLIGILSVSAAYTL. Topologically, residues 393-416 are extracellular; it reads YGVNYWSPLDILNRYLDNYTSGNR. A helical membrane pass occupies residues 417–435; it reads AGVFLISFIFAFDQLGANL. At 436 to 460 the chain is on the cytoplasmic side; the sequence is SGNSIPAGTDLTALLPKFINIRRGS. Residues 461-477 form a helical membrane-spanning segment; it reads YICALISLAICPWDLLS. Residues 478 to 483 lie on the Extracellular side of the membrane; that stretch reads SSSKFT. The chain crosses the membrane as a helical span at residues 484–507; sequence TALAAYAVFLSAIAGVISADYFIV. Topologically, residues 508 to 537 are cytoplasmic; it reads RKGYVNIFHCYTDKPGSYYMYNKYGTNWRA. A helical membrane pass occupies residues 538 to 562; it reads VVAYIFGIAPNFAGFLGSVGVSVPI. The Extracellular segment spans residues 563–572; sequence GAMKVYYLNY. Residues 573–590 traverse the membrane as a helical segment; that stretch reads FVGYLLAALSYCILVYFY. The Cytoplasmic segment spans residues 591 to 639; the sequence is PIKGIPGDAKITDRKWLEEWVEVEEFGTEREAFEEYGGVSTGYEKIRYI. Residue Lys-635 forms a Glycyl lysine isopeptide (Lys-Gly) (interchain with G-Cter in ubiquitin) linkage.

This sequence belongs to the purine-cytosine permease (2.A.39) family.

It localises to the membrane. In terms of biological role, high-affinity transport of uridine. This Saccharomyces cerevisiae (strain ATCC 204508 / S288c) (Baker's yeast) protein is Uridine permease (FUI1).